A 246-amino-acid polypeptide reads, in one-letter code: E3 ubiquitin-protein ligase MARCHF2 (246 aa).

The RING-CH-type zinc-finger motif lies at 56–116 (GTQSDGPICR…ELCHTEFAVE (61 aa)). Residues Cys64, Cys67, Cys80, Cys82, His90, Cys93, Cys106, and Cys109 each coordinate Zn(2+). The next 2 helical transmembrane spans lie at 138-158 (LFCD…SGWL) and 175-195 (AVGL…WTLV).

It localises to the endoplasmic reticulum membrane. The protein resides in the lysosome membrane. Its subcellular location is the endosome membrane. It carries out the reaction S-ubiquitinyl-[E2 ubiquitin-conjugating enzyme]-L-cysteine + [acceptor protein]-L-lysine = [E2 ubiquitin-conjugating enzyme]-L-cysteine + N(6)-ubiquitinyl-[acceptor protein]-L-lysine.. Its pathway is protein modification; protein ubiquitination. In terms of biological role, E3 ubiquitin-protein ligase which may be involved in endosomal trafficking. E3 ubiquitin ligases accept ubiquitin from an E2 ubiquitin-conjugating enzyme in the form of a thioester and then directly transfer the ubiquitin to targeted substrates. The protein is E3 ubiquitin-protein ligase MARCHF2 (marchf2) of Xenopus laevis (African clawed frog).